Reading from the N-terminus, the 271-residue chain is High mobility group protein homolog TDP-1 (271 aa).

The 56-residue stretch at 8 to 63 (GPLPTDIEETVITIMREEGVRYITAKILRMRLESKYQMEFGPHKAAIDDIVARAMQ) folds into the DEK-C domain. Residues 75–118 (LKEKDASKSSGGKGSKRARSAGAEAPSKTKKEMTEKPKKPADYP) are disordered. The span at 101–116 (SKTKKEMTEKPKKPAD) shows a compositional bias: basic and acidic residues. 2 DNA-binding regions (HMG box) span residues 118–186 (PKPA…DEYK) and 206–270 (PKRA…AALP).

The protein resides in the nucleus. Its function is as follows. Unknown. May play a role in transcription and/or DNA replication. It is not known whether this protein is DNA sequence binding-specific or not. The polypeptide is High mobility group protein homolog TDP-1 (Trypanosoma brucei rhodesiense).